Consider the following 192-residue polypeptide: UPF0149 protein YPO0911/y3298/YP_3608 (192 aa).

Belongs to the UPF0149 family.

The protein is UPF0149 protein YPO0911/y3298/YP_3608 of Yersinia pestis.